Reading from the N-terminus, the 66-residue chain is UPF0150 protein AF_0072.1 (66 aa).

This sequence belongs to the UPF0150 family.

This chain is UPF0150 protein AF_0072.1, found in Archaeoglobus fulgidus (strain ATCC 49558 / DSM 4304 / JCM 9628 / NBRC 100126 / VC-16).